We begin with the raw amino-acid sequence, 201 residues long: Holliday junction branch migration complex subunit RuvA (201 aa).

Residues M1–A64 are domain I. Positions Q65 to E143 are domain II. The tract at residues H144–S154 is flexible linker. The segment at S154–L201 is domain III.

Belongs to the RuvA family. In terms of assembly, homotetramer. Forms an RuvA(8)-RuvB(12)-Holliday junction (HJ) complex. HJ DNA is sandwiched between 2 RuvA tetramers; dsDNA enters through RuvA and exits via RuvB. An RuvB hexamer assembles on each DNA strand where it exits the tetramer. Each RuvB hexamer is contacted by two RuvA subunits (via domain III) on 2 adjacent RuvB subunits; this complex drives branch migration. In the full resolvosome a probable DNA-RuvA(4)-RuvB(12)-RuvC(2) complex forms which resolves the HJ.

The protein localises to the cytoplasm. Its function is as follows. The RuvA-RuvB-RuvC complex processes Holliday junction (HJ) DNA during genetic recombination and DNA repair, while the RuvA-RuvB complex plays an important role in the rescue of blocked DNA replication forks via replication fork reversal (RFR). RuvA specifically binds to HJ cruciform DNA, conferring on it an open structure. The RuvB hexamer acts as an ATP-dependent pump, pulling dsDNA into and through the RuvAB complex. HJ branch migration allows RuvC to scan DNA until it finds its consensus sequence, where it cleaves and resolves the cruciform DNA. The protein is Holliday junction branch migration complex subunit RuvA of Actinobacillus pleuropneumoniae serotype 5b (strain L20).